The sequence spans 1061 residues: Atrial natriuretic peptide receptor 1 (1061 aa).

The first 32 residues, 1-32 (MPGPRRPAGSRLRLLLLLLLPPLLLLLRGSHA), serve as a signal peptide directing secretion. Residues 33–473 (GNLTVAVVLP…CNQDHLSTLE (441 aa)) lie on the Extracellular side of the membrane. 2 N-linked (GlcNAc...) asparagine glycosylation sites follow: asparagine 34 and asparagine 45. Residues serine 85, glycine 117, and cysteine 118 each contribute to the chloride site. Cystine bridges form between cysteine 92–cysteine 118 and cysteine 196–cysteine 245. N-linked (GlcNAc...) asparagine glycans are attached at residues asparagine 212, asparagine 338, asparagine 379, asparagine 386, and asparagine 427. Cysteine 455 and cysteine 464 are joined by a disulfide. The helical transmembrane segment at 474-494 (VLALVGSLSLLGILIVSFFIY) threads the bilayer. Residues 495 to 1061 (RKMQLEKELA…LGERGSSTRG (567 aa)) lie on the Cytoplasmic side of the membrane. Phosphoserine occurs at positions 519 and 529. The 278-residue stretch at 528-805 (GSRLTLSGRG…QIRLTLRKFN (278 aa)) folds into the Protein kinase domain. Threonine 532 carries the phosphothreonine modification. Serine 534, serine 538, and serine 542 each carry phosphoserine. Threonine 545 bears the Phosphothreonine mark. The region spanning 876–1006 (TIYFSDIVGF…DTVNTASRME (131 aa)) is the Guanylate cyclase domain.

This sequence belongs to the adenylyl cyclase class-4/guanylyl cyclase family. As to quaternary structure, homodimer. Phosphorylation of the protein kinase-like domain is required for full activation by ANP.

The protein resides in the membrane. The catalysed reaction is GTP = 3',5'-cyclic GMP + diphosphate. Receptor for the atrial natriuretic peptide NPPA/ANP and the brain natriuretic peptide NPPB/BNP which are potent vasoactive hormones playing a key role in cardiovascular homeostasis. Plays an essential role in the regulation of endothelial cell senescence and vascular aging. Upon activation by ANP or BNP, stimulates the production of cyclic guanosine monophosphate (cGMP) that promotes vascular tone and volume homeostasis by activation of protein kinase cGMP-dependent 1/PRKG1 and subsequently PRKAA1, thereby controlling blood pressure and maintaining cardiovascular homeostasis. This Homo sapiens (Human) protein is Atrial natriuretic peptide receptor 1.